The chain runs to 59 residues: Photosystem II reaction center protein K (59 aa).

A propeptide spanning residues 1-22 (MLNIFSLICLNSALHSSSFFFA) is cleaved from the precursor. Residues 38–58 (MPVIPVLFFLLALVWQAAVSF) traverse the membrane as a helical segment.

This sequence belongs to the PsbK family. PSII is composed of 1 copy each of membrane proteins PsbA, PsbB, PsbC, PsbD, PsbE, PsbF, PsbH, PsbI, PsbJ, PsbK, PsbL, PsbM, PsbT, PsbX, PsbY, PsbZ, Psb30/Ycf12, at least 3 peripheral proteins of the oxygen-evolving complex and a large number of cofactors. It forms dimeric complexes.

Its subcellular location is the plastid. The protein localises to the chloroplast thylakoid membrane. Functionally, one of the components of the core complex of photosystem II (PSII). PSII is a light-driven water:plastoquinone oxidoreductase that uses light energy to abstract electrons from H(2)O, generating O(2) and a proton gradient subsequently used for ATP formation. It consists of a core antenna complex that captures photons, and an electron transfer chain that converts photonic excitation into a charge separation. This is Photosystem II reaction center protein K from Calycanthus floridus var. glaucus (Eastern sweetshrub).